Consider the following 357-residue polypeptide: MSDKTPRKPTAFRLEQPARVSAASEQEEPRRPRAVKDLEQITPQADVFDLTDDEAAELEILDPAFEAPERKGWSLSRILFGALGILVSFAIGIWTEDLIRALFVRADWLGWTALGVAMVALAAFAAIILRELVALRRLASVQHLRKDAADAAERDDMAAARKAVDALRTIAAGIPETAKGRQLLDSLTDDIIDGRDLIRLAETEILRPLDREARTLVLNASKRVSIVTAISPRALVDIGYVIFESARLIRRLSQLYGGRPGTLGFIKLARRVIAHLAVTGTIAMGDSVIQQLVGHGLASRLSAKLGEGVVNGLMTARMGIAAMDVVRPFPFNAEKRPGIGDFIGDLARLNSDRNARK.

The disordered stretch occupies residues 1–36 (MSDKTPRKPTAFRLEQPARVSAASEQEEPRRPRAVK). Over residues 27–36 (EEPRRPRAVK) the composition is skewed to basic and acidic residues. 2 consecutive transmembrane segments (helical) span residues 78–98 (ILFGALGILVSFAIGIWTEDL) and 109–129 (LGWTALGVAMVALAAFAAIIL).

It belongs to the UPF0283 family.

Its subcellular location is the cell inner membrane. The polypeptide is UPF0283 membrane protein BOV_0999 (Brucella ovis (strain ATCC 25840 / 63/290 / NCTC 10512)).